Here is a 619-residue protein sequence, read N- to C-terminus: Frizzled and smoothened-like protein L (619 aa).

The signal sequence occupies residues M1–C24. 7 N-linked (GlcNAc...) asparagine glycosylation sites follow: N4, N63, N112, N143, N159, N184, and N203. Topologically, residues Q25–S245 are extracellular. One can recognise an FZ domain in the interval D31–N169. 2 disulfide bridges follow: C36–C106 and C48–C99. A helical membrane pass occupies residues N246–L266. Residues N267 to S278 lie on the Cytoplasmic side of the membrane. The helical transmembrane segment at L279–G299 threads the bilayer. At P300 to A321 the chain is on the extracellular side. A helical transmembrane segment spans residues T322 to F342. Topologically, residues E343–K358 are cytoplasmic. A helical membrane pass occupies residues K359–T379. Topologically, residues K380–L402 are extracellular. A helical transmembrane segment spans residues F403 to F423. Residues E424–S444 are Cytoplasmic-facing. A helical membrane pass occupies residues I445–M465. The Extracellular segment spans residues N466–S497. Residues I498–L518 form a helical membrane-spanning segment. Topologically, residues Q519–S619 are cytoplasmic. A disordered region spans residues L581–S605.

This sequence belongs to the G-protein coupled receptor Fz/Smo family.

The protein localises to the membrane. The sequence is that of Frizzled and smoothened-like protein L (fslL) from Dictyostelium discoideum (Social amoeba).